The primary structure comprises 274 residues: Kit ligand (274 aa).

Residues Met-1–Thr-25 form the signal peptide. Pyrrolidone carboxylic acid is present on Gln-26. Topologically, residues Gln-26–Gln-215 are extracellular. Intrachain disulfides connect Cys-29/Cys-114 and Cys-68/Cys-164. N-linked (GlcNAc...) asparagine glycans are attached at residues Asn-90, Asn-97, Asn-145, and Asn-196. Residues Trp-216 to Trp-238 form a helical membrane-spanning segment. Residues Lys-239 to Val-274 lie on the Cytoplasmic side of the membrane.

This sequence belongs to the SCF family. As to quaternary structure, homodimer, non-covalently linked. Heterotetramer with KIT, binding two KIT molecules; thereby mediates KIT dimerization and subsequent activation by autophosphorylation. Post-translationally, a soluble form is produced by proteolytic processing of the extracellular domain.

The protein resides in the cytoplasm. It localises to the cytoskeleton. The protein localises to the cell membrane. Its subcellular location is the cell projection. It is found in the lamellipodium. The protein resides in the filopodium. It localises to the secreted. In terms of biological role, ligand for the receptor-type protein-tyrosine kinase KIT. Plays an essential role in the regulation of cell survival and proliferation, hematopoiesis, stem cell maintenance, gametogenesis, mast cell development, migration and function, and in melanogenesis. KITLG/SCF binding can activate several signaling pathways. Promotes phosphorylation of PIK3R1, the regulatory subunit of phosphatidylinositol 3-kinase, and subsequent activation of the kinase AKT1. KITLG/SCF and KIT also transmit signals via GRB2 and activation of RAS, RAF1 and the MAP kinases MAPK1/ERK2 and/or MAPK3/ERK1. KITLG/SCF and KIT promote activation of STAT family members STAT1, STAT3 and STAT5. KITLG/SCF and KIT promote activation of PLCG1, leading to the production of the cellular signaling molecules diacylglycerol and inositol 1,4,5-trisphosphate. KITLG/SCF acts synergistically with other cytokines, probably interleukins. In Sus scrofa (Pig), this protein is Kit ligand (KITLG).